We begin with the raw amino-acid sequence, 204 residues long: Large ribosomal subunit protein bL25 (204 aa).

The protein belongs to the bacterial ribosomal protein bL25 family. CTC subfamily. Part of the 50S ribosomal subunit; part of the 5S rRNA/L5/L18/L25 subcomplex. Contacts the 5S rRNA. Binds to the 5S rRNA independently of L5 and L18.

Its function is as follows. This is one of the proteins that binds to the 5S RNA in the ribosome where it forms part of the central protuberance. The sequence is that of Large ribosomal subunit protein bL25 from Wolbachia sp. subsp. Brugia malayi (strain TRS).